Consider the following 638-residue polypeptide: Phenylethylamine oxidase (638 aa).

The propeptide occupies M1 to T2. Y296 to Y307 lines the substrate pocket. Catalysis depends on D298, which acts as the Proton acceptor. The cysteines at positions 317 and 343 are disulfide-linked. Residue I379–Y384 participates in substrate binding. Catalysis depends on Y382, which acts as the Schiff-base intermediate with substrate; via topaquinone. At Y382 the chain carries 2',4',5'-topaquinone. The Cu cation site is built by H431, H433, and H592.

Belongs to the copper/topaquinone oxidase family. Homodimer. Cu cation is required as a cofactor. Requires L-topaquinone as cofactor. Topaquinone (TPQ) is generated by copper-dependent autoxidation of a specific tyrosyl residue.

The catalysed reaction is a primary methyl amine + O2 + H2O = an aldehyde + H2O2 + NH4(+). It catalyses the reaction 2-phenylethylamine + O2 + H2O = 2-phenylacetaldehyde + H2O2 + NH4(+). Its function is as follows. Catalyzes the oxidative deamination of phenylethylamine to phenylacetaldehyde with the concomitant production of hydrogen peroxide and ammonia. The chain is Phenylethylamine oxidase from Arthrobacter globiformis.